We begin with the raw amino-acid sequence, 364 residues long: MKRTPLFEKHVELGAKMVDFAGWEMPLYYTSIFEEVMAVRKSVGMFDVSHMGEFLVKGPEAVSFIDFLITNDFSSLPDGKAIYSVMCNENGGIIDDLVVYKVSPDEALMVVNAANIEKDFNWIKSHSKNFDVEVSNISDTTALIAFQGPKAQETLQELVEDGLEEIAYYSFRKSIVAGVETLVSRTGYTGEDGFELMLEAKNAPKVWDALMNLLRKIDGRPAGLGARDVCRLEATYLLYGQDMDENTNPFEVGLSWVVKLNKDFVGKEALLKAKEKVERKLVALELSGKRIARKGYEVLKNGERVGEITSGNFSPTLGKSIALALVSKSVKIGDQLGVVFPGGKLVEALVVKKPFYRGSVRREV.

This sequence belongs to the GcvT family. As to quaternary structure, the glycine cleavage system is composed of four proteins: P, T, L and H.

The enzyme catalyses N(6)-[(R)-S(8)-aminomethyldihydrolipoyl]-L-lysyl-[protein] + (6S)-5,6,7,8-tetrahydrofolate = N(6)-[(R)-dihydrolipoyl]-L-lysyl-[protein] + (6R)-5,10-methylene-5,6,7,8-tetrahydrofolate + NH4(+). In terms of biological role, the glycine cleavage system catalyzes the degradation of glycine. The polypeptide is Aminomethyltransferase (Thermotoga maritima (strain ATCC 43589 / DSM 3109 / JCM 10099 / NBRC 100826 / MSB8)).